A 235-amino-acid chain; its full sequence is NAD(P)H-quinone oxidoreductase subunit K, chloroplastic (235 aa).

[4Fe-4S] cluster is bound by residues Cys43, Cys44, Cys108, and Cys139.

It belongs to the complex I 20 kDa subunit family. In terms of assembly, NDH is composed of at least 16 different subunits, 5 of which are encoded in the nucleus. [4Fe-4S] cluster serves as cofactor.

The protein resides in the plastid. It is found in the chloroplast thylakoid membrane. It catalyses the reaction a plastoquinone + NADH + (n+1) H(+)(in) = a plastoquinol + NAD(+) + n H(+)(out). The catalysed reaction is a plastoquinone + NADPH + (n+1) H(+)(in) = a plastoquinol + NADP(+) + n H(+)(out). Its function is as follows. NDH shuttles electrons from NAD(P)H:plastoquinone, via FMN and iron-sulfur (Fe-S) centers, to quinones in the photosynthetic chain and possibly in a chloroplast respiratory chain. The immediate electron acceptor for the enzyme in this species is believed to be plastoquinone. Couples the redox reaction to proton translocation, and thus conserves the redox energy in a proton gradient. The polypeptide is NAD(P)H-quinone oxidoreductase subunit K, chloroplastic (Ipomoea purpurea (Common morning glory)).